The chain runs to 394 residues: DNA repair protein brc-2 (394 aa).

The segment covering 1 to 12 (MGDSSKKVKDSF) has biased composition (basic and acidic residues). Disordered stretches follow at residues 1–30 (MGDS…VPIS) and 56–136 (MLNS…EKKK). Positions 1 to 60 (MGDSSKKVKDSFDTISEPDSFDEPKGVPISMEPVFSTAAGIRIDVKQESIDKSKKMLNSD) are interaction with rad-51. Residues 28-62 (PISMEPVFSTAAGIRIDVKQESIDKSKKMLNSDLK) are BRCA2 repeat-like region. A compositionally biased stretch (low complexity) spans 56 to 73 (MLNSDLKSKSSSKGGFSS). Residues 60 to 89 (DLKSKSSSKGGFSSPLVRKNNGSSAFVSPF) form an interaction with rad-51-DNA complexes region. Over residues 124–134 (KKSKKHSKKEK) the composition is skewed to basic residues. Residues 371–389 (WKDFGSYLKHKEDKKKRRS) form a required for ssDNA binding region.

Interacts (via N-terminus) with rad-51; regulates rad-51 recruitment to sites of DNA double strand breaks. As to expression, expressed in the germline, with highest expression in cells undergoing oogenesis.

It localises to the nucleus. Its subcellular location is the chromosome. Required for the homologous recombination repair of DNA double strand breaks, thereby playing a role in chromosome integrity. Acts by targeting rad-51 to sites of DNA damage and stabilizing rad-51-DNA filaments by blocking ATP hydrolysis catalyzed by rad-51. Promotes rad-51 mediated displacement-loop (D-loop) formation during strand invasion between the invading single-stranded DNA (ssDNA) and the homologous duplex DNA. Also functions independently of rad-51 in DNA double-strand break (DSB) repair by promoting DNA single-strand annealing (SSA) when the homologous recombination (HR) and non-homologous end joining (NHEJ) pathways are compromised. Binds selectively to single-stranded (ssDNA) via its C-terminus. Involved in telomere maintenance and replicative senescence. The chain is DNA repair protein brc-2 from Caenorhabditis elegans.